Reading from the N-terminus, the 233-residue chain is Phycoerythrobilin synthase (233 aa).

The protein belongs to the HY2 family.

The enzyme catalyses (3Z)-phycoerythrobilin + 2 oxidized 2[4Fe-4S]-[ferredoxin] = biliverdin IXalpha + 2 reduced 2[4Fe-4S]-[ferredoxin] + 4 H(+). Its function is as follows. Plays a role in phycoerythrobilin biosynthesis, the red pigment chromophore photosynthetically active biliproteins of the host cyanobacteria. Uses a four-electron reduction to carry out the reactions catalyzed by two enzymes (EC 1.3.7.2 and EC 1.3.7.3) in host. In Prochlorococcus, this protein is Phycoerythrobilin synthase (pebS).